A 347-amino-acid chain; its full sequence is 4-hydroxy-2-oxovalerate aldolase (347 aa).

The Pyruvate carboxyltransferase domain occupies 2–252 (ILISDATLRD…DTRTTFERVM (251 aa)). 10–11 (RD) serves as a coordination point for substrate. Residue Asp-11 participates in Mn(2+) binding. His-14 (proton acceptor) is an active-site residue. The substrate site is built by Ser-164 and His-191. His-191 and His-193 together coordinate Mn(2+).

Belongs to the 4-hydroxy-2-oxovalerate aldolase family.

The catalysed reaction is (S)-4-hydroxy-2-oxopentanoate = acetaldehyde + pyruvate. This Burkholderia pseudomallei (strain 1106a) protein is 4-hydroxy-2-oxovalerate aldolase.